The following is a 551-amino-acid chain: Structure-specific endonuclease subunit MUS81 (551 aa).

Disordered stretches follow at residues 85 to 131 (LASG…AGYW) and 231 to 255 (PEEH…EVGV). A Phosphoserine modification is found at S95. Positions 110 to 131 (VQGSSMPVPTQPQAGSTNAGYW) are enriched in polar residues. The interval 124 to 243 (GSTNAGYWPA…HHEESPVPEA (120 aa)) is interaction with BLM. A winged helix domain (WHD); critical for endonuclease activity region spans residues 131-230 (WPAQNSGARE…GLSTLNTAFQ (100 aa)). One can recognise an ERCC4 domain in the interval 270-372 (LLCVDIGETR…HRIYLVEEHG (103 aa)). Residues D274, E277, and D307 contribute to the active site. Mg(2+)-binding residues include D274, E277, D307, E333, and R334. Residues 471 to 545 (VREVFARQLM…LSRTLYQLYC (75 aa)) are helix-hairpin-helix (2HhH); involved in DNA recognition and bending.

It belongs to the XPF family. In terms of assembly, part of the heterodimeric DNA structure-specific endonuclease complex MUS81-EME1. Part of the heterodimeric DNA structure-specific endonuclease complex MUS81-EME2. Interacts with BLM; may stimulate the endonuclease activity of MUS81. Interacts with SLX4/BTBD12; this interaction is direct and links the MUS81-EME1 complex to SLX4, which may coordinate the action of the structure-specific endonuclease during DNA repair. Interacts with DCLRE1B/Apollo. Interacts with RECQL5; this interaction stimulates mitotic DNA synthesis. Interacts with CHEK2. Mg(2+) is required as a cofactor.

The protein resides in the nucleus. The protein localises to the nucleolus. Its function is as follows. Catalytic subunit of two functionally distinct, structure-specific, heterodimeric DNA endonucleases MUS81-EME1 and MUS81-EME2 that are involved in the maintenance of genome stability. Both endonucleases have essentially the same substrate specificity though MUS81-EME2 is more active than its MUS81-EME1 counterpart. Both cleave 3'-flaps and nicked Holliday junctions, and exhibit limited endonuclease activity with 5' flaps and nicked double-stranded DNAs. MUS81-EME2 which is active during the replication of DNA is more specifically involved in replication fork processing. Replication forks frequently encounter obstacles to their passage, including DNA base lesions, DNA interstrand cross-links, difficult-to-replicate sequences, transcription bubbles, or tightly bound proteins. One mechanism for the restart of a stalled replication fork involves nucleolytic cleavage mediated by the MUS81-EME2 endonuclease. By acting upon the stalled fork, MUS81-EME2 generates a DNA double-strand break (DSB) that can be repaired by homologous recombination, leading to the restoration of an active fork. MUS81-EME2 could also function in telomere maintenance. MUS81-EME1, on the other hand, is active later in the cell cycle and functions in the resolution of mitotic recombination intermediates including the Holliday junctions, the four-way DNA intermediates that form during homologous recombination. The chain is Structure-specific endonuclease subunit MUS81 from Rattus norvegicus (Rat).